Here is a 417-residue protein sequence, read N- to C-terminus: Argininosuccinate synthase (417 aa).

Residue 8–16 participates in ATP binding; the sequence is AYSGGLDTS. Y87 provides a ligand contact to L-citrulline. Position 117 (G117) interacts with ATP. T119, N123, and D124 together coordinate L-aspartate. N123 provides a ligand contact to L-citrulline. 4 residues coordinate L-citrulline: R127, S175, E259, and Y271.

It belongs to the argininosuccinate synthase family. Type 1 subfamily. In terms of assembly, homotetramer.

It localises to the cytoplasm. It catalyses the reaction L-citrulline + L-aspartate + ATP = 2-(N(omega)-L-arginino)succinate + AMP + diphosphate + H(+). Its pathway is amino-acid biosynthesis; L-arginine biosynthesis; L-arginine from L-ornithine and carbamoyl phosphate: step 2/3. This chain is Argininosuccinate synthase, found in Clavibacter sepedonicus (Clavibacter michiganensis subsp. sepedonicus).